The sequence spans 887 residues: Semaphorin-6B (887 aa).

The first 26 residues, 1–26 (MWTPRAPPPRPALLFLLLLLLRVTHG), serve as a signal peptide directing secretion. The Extracellular portion of the chain corresponds to 27-605 (LFPDEPPPLS…VSVNLLVTSS (579 aa)). The region spanning 32–525 (PPPLSVAPRD…FPRCVVRVPV (494 aa)) is the Sema domain. The N-linked (GlcNAc...) asparagine glycan is linked to N75. Disulfide bonds link C117–C127 and C145–C154. N-linked (GlcNAc...) asparagine glycans are attached at residues N156, N168, and N292. Intrachain disulfides connect C268/C379 and C293/C338. N387, N442, and N463 each carry an N-linked (GlcNAc...) asparagine glycan. 4 cysteine pairs are disulfide-bonded: C487–C519, C528–C546, C534–C580, and C538–C554. The chain crosses the membrane as a helical span at residues 606–626 (VAAFVVGAVVSGFSVGWFVGL). Residues 627-887 (RERRELARRK…TGERTAPPVP (261 aa)) lie on the Cytoplasmic side of the membrane. Disordered regions lie at residues 656–675 (LGERRGTGTGGRGGAGGGPG), 697–717 (HGGPHDLDSGLLPTPEQTPLP), and 759–887 (APEQ…PPVP). Positions 662-674 (TGTGGRGGAGGGP) are enriched in gly residues. R667 is modified (omega-N-methylarginine). Over residues 707–717 (LLPTPEQTPLP) the composition is skewed to low complexity.

Belongs to the semaphorin family.

Its subcellular location is the cell membrane. Functionally, functions as a cell surface repellent for mossy fibers of developing neurons in the hippocampus where it plays a role in axon guidance. May function through the PLXNA4 receptor expressed by mossy cell axons. This chain is Semaphorin-6B (Sema6b), found in Rattus norvegicus (Rat).